The sequence spans 310 residues: Carbamate kinase-like protein YqeA (310 aa).

This sequence belongs to the carbamate kinase family.

The polypeptide is Carbamate kinase-like protein YqeA (yqeA) (Escherichia coli (strain K12)).